The chain runs to 403 residues: MKISTLPQEFMQAQPILEHIESAGFEAYFVGGAVRDMLLNKPIHDVDIATSAFPEEIKALFTKTVDTGIQHGTVMVLDHGDGYEITTFRTESTYTDFRRPDKVTFVRSLAEDLKRRDFTINAIAMTKDGDIIDLFDGLTDMAQKRIRAVGDAEVRFNEDALRIMRALRFSAQLGFDIAPHTKAALKQIGRNLEKIAVERIRVEFEKLLMGQYASNSLSVAIEADLIRYLPGHIKKEDWLTITADLKRNQPQARTVIWPYFLSRLSLRLNELQLFMRSWKTSREDMRAVLSIVPIVKHVQTVSVFELYAIYDYQALLFEVLTLIGTPLATQQRVKQIFDALPITHNRDMCISGGDLLANNIVTPGPQMGRILTQLEHAVIQRIISNRPDSLLEYAKELVDNEKN.

2 residues coordinate ATP: glycine 32 and arginine 35. Glycine 32 and arginine 35 together coordinate CTP. 2 residues coordinate Mg(2+): aspartate 45 and aspartate 47. Arginine 116, aspartate 159, arginine 162, arginine 165, and arginine 168 together coordinate ATP. Positions 116, 159, 162, 165, and 168 each coordinate CTP.

The protein belongs to the tRNA nucleotidyltransferase/poly(A) polymerase family. Bacterial CCA-adding enzyme type 3 subfamily. In terms of assembly, homodimer. The cofactor is Mg(2+).

The catalysed reaction is a tRNA precursor + 2 CTP + ATP = a tRNA with a 3' CCA end + 3 diphosphate. It catalyses the reaction a tRNA with a 3' CCA end + 2 CTP + ATP = a tRNA with a 3' CCACCA end + 3 diphosphate. Catalyzes the addition and repair of the essential 3'-terminal CCA sequence in tRNAs without using a nucleic acid template. Adds these three nucleotides in the order of C, C, and A to the tRNA nucleotide-73, using CTP and ATP as substrates and producing inorganic pyrophosphate. tRNA 3'-terminal CCA addition is required both for tRNA processing and repair. Also involved in tRNA surveillance by mediating tandem CCA addition to generate a CCACCA at the 3' terminus of unstable tRNAs. While stable tRNAs receive only 3'-terminal CCA, unstable tRNAs are marked with CCACCA and rapidly degraded. The polypeptide is CCA-adding enzyme (Leuconostoc citreum (strain KM20)).